Reading from the N-terminus, the 648-residue chain is MGLPKLVCVFLFAACCCCRRAAGVPGEEKQPVPTPDLVEAEVGSTALLKCGPSRASGNFSQVDWFLIHKERQILIFRVHQGKGQREPGEYEHRLSLQDSVATLALSHVTPHDERMFLCKSKRPRLQDHYVELQVFKAPEEPTIQANVVGIHVDRQELREVATCVGRNGYPIPQVLWYKNSLPLQEEENRVHIQSSQIVESSGLYTLKSVLSARLVKEDKDAQFYCELSYRLPSGNHMKESKEVTVPVFYPAEKVWVEVEPVGLLKEGDHVTIRCLTDGNPQPHFTINKKDPSTGEMEEESTDENGLLSLEPAEKHHSGLYQCQSLDLETTITLSSDPLELLVNYVSDVQVNPTAPEVQEGESLTLTCEAESNQDLEFEWLRDKTGQLLGKGPVLQLNNVRREAGGRYLCMASVPRVPGLNRTQLVSVGIFGSPWMALKERKVWVQENAVLNLSCEASGHPQPTISWNVNGSATEWNPDPQTVVSTLNVLVTPELLETGAECTASNSLGSNTTTIVLKLVTLTTLIPDSSQTTGLSTLTVSPHTRANSTSTEKKLPQPESKGVVIVAVIVCTLVLAVLGAALYFFYKKGKLPCGRSGKQEITLPPTRKSEFVVEVKSDKLPEEMALLQGSNGDKRAPGDQGEKYIDLRH.

Positions methionine 1–glycine 23 are cleaved as a signal peptide. 2 consecutive Ig-like V-type domains span residues valine 24–glutamate 131 and proline 141–threonine 244. Over valine 24–valine 563 the chain is Extracellular. 5 cysteine pairs are disulfide-bonded: cysteine 50-cysteine 118, cysteine 163-cysteine 225, cysteine 274-cysteine 322, cysteine 367-cysteine 409, and cysteine 454-cysteine 501. An N-linked (GlcNAc...) asparagine glycan is attached at asparagine 58. Ig-like C2-type domains are found at residues proline 246–threonine 332, proline 337–serine 426, and serine 432–threonine 512. The segment at glutamine 281–asparagine 304 is disordered. A glycan (N-linked (GlcNAc...) asparagine) is linked at asparagine 510. The span at threonine 532–serine 549 shows a compositional bias: polar residues. Residues threonine 532–leucine 554 form a disordered region. Residues isoleucine 564–phenylalanine 584 form a helical membrane-spanning segment. Residues tyrosine 585–histidine 648 are Cytoplasmic-facing. Residues serine 608 and serine 616 each carry the phosphoserine modification. The interval leucine 625 to histidine 648 is disordered. Residues glycine 631–histidine 648 are compositionally biased toward basic and acidic residues.

As to expression, detected in melanoma cell lines.

It localises to the membrane. In terms of biological role, plays a role in cell adhesion, and in cohesion of the endothelial monolayer at intercellular junctions in vascular tissue. Its expression may allow melanoma cells to interact with cellular elements of the vascular system, thereby enhancing hematogeneous tumor spread. Could be an adhesion molecule active in neural crest cells during embryonic development. Acts as a surface receptor that triggers tyrosine phosphorylation of FYN and PTK2/FAK1, and a transient increase in the intracellular calcium concentration. This Mus musculus (Mouse) protein is Cell surface glycoprotein MUC18 (Mcam).